A 156-amino-acid polypeptide reads, in one-letter code: MPRRRIVTKRNILPDPRFGSDLLAKFINILMLNGKKSTAESIVYSALDSLFRRSNKNCLEAFEIALNNVRPVVEVKSRRVGGSTYQVPVEVRLVRRNTLAMRWIIEAARKRNDKSMELRLASELLDAIEGKGHAVKKREEIHRIAESNKAFAHYRW.

This sequence belongs to the universal ribosomal protein uS7 family. In terms of assembly, part of the 30S ribosomal subunit. Contacts proteins S9 and S11.

In terms of biological role, one of the primary rRNA binding proteins, it binds directly to 16S rRNA where it nucleates assembly of the head domain of the 30S subunit. Is located at the subunit interface close to the decoding center, probably blocks exit of the E-site tRNA. The sequence is that of Small ribosomal subunit protein uS7 from Blochmanniella pennsylvanica (strain BPEN).